A 259-amino-acid polypeptide reads, in one-letter code: UPF0246 protein NMCC_0856 (259 aa).

It belongs to the UPF0246 family.

This chain is UPF0246 protein NMCC_0856, found in Neisseria meningitidis serogroup C (strain 053442).